Consider the following 342-residue polypeptide: MACFLNCVRFDVSKTITDKPTSQGSGVTCYNSWDDVETLTSNFSRLIGSGGYSSIYMARFSGSDKAALKVHVSSHRLYQVFRLELDILLRLQHPNIVKLLGYFDDSEENGALLLEYLPQGNLQEKLQSNSKQVLQWRNRVAIALQLVQAIEHIHEKCSPQIVHGDIKSSNVLLDKNFDCKLCDFGSAKVGFSSMVQPPTMSPRSRQVKMVGSPGYTDPHYLRTGIASKKMDMYGFGVVVLELVSGKEAFSAERGEMLVHIAAPLMNEILDSSVDISEDKVRQFLDPRLLRDSLDIDEVKTMLSVAAVCISSKLSLRPSAAQVADTLIKEIPSLSFLGCGKGV.

The 296-residue stretch at Ser-41–Leu-336 folds into the Protein kinase domain. ATP-binding positions include Ile-47–Ile-55 and Lys-69. The active-site Proton acceptor is the Asp-165. 2 positions are modified to phosphoserine: Ser-169 and Ser-201. Tyr-220 bears the Phosphotyrosine mark.

Belongs to the protein kinase superfamily. Ser/Thr protein kinase family.

It catalyses the reaction L-seryl-[protein] + ATP = O-phospho-L-seryl-[protein] + ADP + H(+). It carries out the reaction L-threonyl-[protein] + ATP = O-phospho-L-threonyl-[protein] + ADP + H(+). This is Probable receptor-like protein kinase At4g10390 from Arabidopsis thaliana (Mouse-ear cress).